The chain runs to 174 residues: uncharacterized protein (174 aa).

Belongs to the archaeal NMN adenylyltransferase family.

This is an uncharacterized protein from Archaeoglobus fulgidus (strain ATCC 49558 / DSM 4304 / JCM 9628 / NBRC 100126 / VC-16).